The sequence spans 449 residues: Probable glycosyltransferase 5 (449 aa).

Positions 1–14 are enriched in basic and acidic residues; the sequence is MMEKHGGKVTSDRR. Residues 1–24 form a disordered region; it reads MMEKHGGKVTSDRRAGRRQHGQRC. Topologically, residues 1–28 are cytoplasmic; the sequence is MMEKHGGKVTSDRRAGRRQHGQRCSASD. Residues 29-49 form a helical; Signal-anchor for type II membrane protein membrane-spanning segment; the sequence is AAPLVVVVILIVAALFLILGP. The Lumenal segment spans residues 50-449; it reads TGSSSFTVPR…HPTFRAARPT (400 aa). A disordered region spans residues 74–109; that stretch reads APPPPPPPAQMQAGANASSEEDSGLPPPRQLTDPPY. Residues N89, N413, and N422 are each glycosylated (N-linked (GlcNAc...) asparagine).

This sequence belongs to the glycosyltransferase 34 family.

The protein localises to the golgi apparatus membrane. Functionally, probable glycosyltransferase that may be involved in the biosynthesis of xyloglucan. This chain is Probable glycosyltransferase 5, found in Oryza sativa subsp. japonica (Rice).